The sequence spans 187 residues: MFRPASRALLRAPAVARGPASRRLISTAPAESKPRSWKNTAVRLGLAAGAIYYYNTSNVFAENPSFSLNNQLKKNSAEEPLPTLDSIKPRIREERESAAPKPNAEQAPAQELPFGEGAVKSPQELEEEAGQEAAFNPETGEINWDCPCLGGMAHGPCGEEFKAAFSCFVYSEEEPKGMDCIEKFKCV.

The transit peptide at 1 to 24 directs the protein to the mitochondrion; sequence MFRPASRALLRAPAVARGPASRRL. The Mitochondrial matrix segment spans residues 25-43; that stretch reads ISTAPAESKPRSWKNTAVR. Residues 44–61 traverse the membrane as a helical; Signal-anchor for type II membrane protein segment; that stretch reads LGLAAGAIYYYNTSNVFA. The Mitochondrial intermembrane portion of the chain corresponds to 62 to 187; it reads ENPSFSLNNQ…MDCIEKFKCV (126 aa). The tract at residues 73–115 is disordered; the sequence is KKNSAEEPLPTLDSIKPRIREERESAAPKPNAEQAPAQELPFG. A compositionally biased stretch (basic and acidic residues) spans 87–98; sequence IKPRIREERESA. 2 disulfides stabilise this stretch: cysteine 146–cysteine 148 and cysteine 167–cysteine 180. Positions 154-187 constitute a CHCH domain; it reads HGPCGEEFKAAFSCFVYSEEEPKGMDCIEKFKCV. A Cx9C motif motif is present at residues 157–167; that stretch reads CGEEFKAAFSC.

Monomer. Requires Cu(2+) as cofactor. It depends on Zn(2+) as a cofactor.

The protein resides in the mitochondrion inner membrane. Functionally, required for the import and folding of small cysteine-containing proteins (small Tim) in the mitochondrial intermembrane space (IMS). Forms a redox cycle with ERV1 that involves a disulfide relay system. Precursor proteins to be imported into the IMS are translocated in their reduced form into the mitochondria. The oxidized form of MIA40 forms a transient intermolecular disulfide bridge with the reduced precursor protein, resulting in oxidation of the precursor protein that now contains an intramolecular disulfide bond and is able to undergo folding in the IMS. This is Mitochondrial intermembrane space import and assembly protein 40 (mia40) from Aspergillus oryzae (strain ATCC 42149 / RIB 40) (Yellow koji mold).